Here is an 818-residue protein sequence, read N- to C-terminus: Serine/threonine-protein phosphatase 4 regulatory subunit 3 (818 aa).

Residues 1 to 100 (MTDTRRRVKV…DEIWEKICQV (100 aa)) enclose the WH1 domain. The segment at 718 to 818 (LAKSSFSGRQ…PPSKKSRLSS (101 aa)) is disordered. The segment covering 721 to 730 (SSFSGRQNPS) has biased composition (polar residues). Low complexity predominate over residues 736 to 756 (SGSTKTSLSSPPPSASLSPGS). Positions 788-804 (YPDDDEEEEDDDDEESK) are enriched in acidic residues.

The protein belongs to the SMEK family. Serine/threonine-protein phosphatase 4 (PP4) occurs in different assemblies of the catalytic and one or more regulatory subunits.

Its function is as follows. Regulatory subunit of serine/threonine-protein phosphatase 4. The protein is Serine/threonine-protein phosphatase 4 regulatory subunit 3 (smek1) of Tetraodon nigroviridis (Spotted green pufferfish).